Reading from the N-terminus, the 557-residue chain is Membrane protein insertase YidC (557 aa).

5 consecutive transmembrane segments (helical) span residues 6–26 (TILWAVFSLSGLMLYNNWQVH), 219–239 (IGPFGGAFSASTFTGPAIYTD), 367–387 (IVGNWGWSIILLTVLIKLAFF), 437–457 (LGGCLPVVIQIPVFISLYWVL), and 514–534 (MPIVFSIMFFFFPAGLVLYWV).

Belongs to the OXA1/ALB3/YidC family. Type 1 subfamily. As to quaternary structure, interacts with the Sec translocase complex via SecD. Specifically interacts with transmembrane segments of nascent integral membrane proteins during membrane integration.

The protein localises to the cell inner membrane. Functionally, required for the insertion and/or proper folding and/or complex formation of integral membrane proteins into the membrane. Involved in integration of membrane proteins that insert both dependently and independently of the Sec translocase complex, as well as at least some lipoproteins. Aids folding of multispanning membrane proteins. In Polynucleobacter asymbioticus (strain DSM 18221 / CIP 109841 / QLW-P1DMWA-1) (Polynucleobacter necessarius subsp. asymbioticus), this protein is Membrane protein insertase YidC.